The following is a 184-amino-acid chain: SsrA-binding protein (184 aa).

Over residues 1 to 11 (MAAKKSTPTDS) the composition is skewed to polar residues. Positions 1–31 (MAAKKSTPTDSGKSKGKKNKAQKGAGQKGAG) are disordered.

This sequence belongs to the SmpB family.

It localises to the cytoplasm. Functionally, required for rescue of stalled ribosomes mediated by trans-translation. Binds to transfer-messenger RNA (tmRNA), required for stable association of tmRNA with ribosomes. tmRNA and SmpB together mimic tRNA shape, replacing the anticodon stem-loop with SmpB. tmRNA is encoded by the ssrA gene; the 2 termini fold to resemble tRNA(Ala) and it encodes a 'tag peptide', a short internal open reading frame. During trans-translation Ala-aminoacylated tmRNA acts like a tRNA, entering the A-site of stalled ribosomes, displacing the stalled mRNA. The ribosome then switches to translate the ORF on the tmRNA; the nascent peptide is terminated with the 'tag peptide' encoded by the tmRNA and targeted for degradation. The ribosome is freed to recommence translation, which seems to be the essential function of trans-translation. The sequence is that of SsrA-binding protein from Corynebacterium jeikeium (strain K411).